We begin with the raw amino-acid sequence, 457 residues long: tRNA-2-methylthio-N(6)-dimethylallyladenosine synthase (457 aa).

The MTTase N-terminal domain occupies 2–119 (KKVFIKTFGC…LPELIDARRR (118 aa)). [4Fe-4S] cluster contacts are provided by Cys-11, Cys-48, Cys-82, Cys-156, Cys-160, and Cys-163. A Radical SAM core domain is found at 142–375 (RVEGPSAFVS…QATIDANMAR (234 aa)). Residues 378-448 (EGMVGSVQRI…PHSLRGDVVE (71 aa)) form the TRAM domain.

The protein belongs to the methylthiotransferase family. MiaB subfamily. Monomer. It depends on [4Fe-4S] cluster as a cofactor.

It is found in the cytoplasm. It carries out the reaction N(6)-dimethylallyladenosine(37) in tRNA + (sulfur carrier)-SH + AH2 + 2 S-adenosyl-L-methionine = 2-methylsulfanyl-N(6)-dimethylallyladenosine(37) in tRNA + (sulfur carrier)-H + 5'-deoxyadenosine + L-methionine + A + S-adenosyl-L-homocysteine + 2 H(+). In terms of biological role, catalyzes the methylthiolation of N6-(dimethylallyl)adenosine (i(6)A), leading to the formation of 2-methylthio-N6-(dimethylallyl)adenosine (ms(2)i(6)A) at position 37 in tRNAs that read codons beginning with uridine. This Ralstonia nicotianae (strain ATCC BAA-1114 / GMI1000) (Ralstonia solanacearum) protein is tRNA-2-methylthio-N(6)-dimethylallyladenosine synthase.